The primary structure comprises 408 residues: MKVLVINAGSSSLKYQLIDMTNESALAIGLCERIGIDNSIITQKRFDGKKLEKQTDLPNHKIALEEVVKALTDSEFGVIKSMDEINAVGHRVVHGGEKFNSSALINEGVEQAIKDCFELAPLHNPPNMMGISSCQEIMPGVPMVAVFDTAFHHTIPPYAYMYALPYELYEKYGIRKYGFHGTSHFYVAKRAAAMLGKPEQDVKVITCHLGNGSSITAVKGGKSIETTMGFTPLEGVAMGTRCGSIDPAVVPFIMEKEGLSTREIDTLMNKKSGVLGVSSLSNDFRDLDEAASKGNQKAELALEIFAYKIKKVIGEYIAVLNGVDAIVFTAGIGENSATIRKRILADLDGIGIKIDEEKNKIRGQEIDISTPDATVRVLVIPTNEELTIARDTKEICETEVKLRSSVPI.

Asn7 is a binding site for Mg(2+). Position 14 (Lys14) interacts with ATP. Position 91 (Arg91) interacts with substrate. Asp148 (proton donor/acceptor) is an active-site residue. ATP is bound by residues 208 to 212, 283 to 285, and 331 to 335; these read HLGNG, DFR, and GIGEN. Residue Glu384 participates in Mg(2+) binding.

This sequence belongs to the acetokinase family. In terms of assembly, homodimer. It depends on Mg(2+) as a cofactor. The cofactor is Mn(2+).

It is found in the cytoplasm. The enzyme catalyses acetate + ATP = acetyl phosphate + ADP. Its pathway is metabolic intermediate biosynthesis; acetyl-CoA biosynthesis; acetyl-CoA from acetate: step 1/2. Functionally, catalyzes the formation of acetyl phosphate from acetate and ATP. Can also catalyze the reverse reaction. The protein is Acetate kinase of Methanosarcina mazei (Methanosarcina frisia).